The chain runs to 229 residues: Large ribosomal subunit protein uL1 (229 aa).

This sequence belongs to the universal ribosomal protein uL1 family. As to quaternary structure, part of the 50S ribosomal subunit.

Its function is as follows. Binds directly to 23S rRNA. The L1 stalk is quite mobile in the ribosome, and is involved in E site tRNA release. Protein L1 is also a translational repressor protein, it controls the translation of the L11 operon by binding to its mRNA. This Lactiplantibacillus plantarum (strain ATCC BAA-793 / NCIMB 8826 / WCFS1) (Lactobacillus plantarum) protein is Large ribosomal subunit protein uL1.